The primary structure comprises 116 residues: Methionine-R-sulfoxide reductase B1 (116 aa).

One can recognise a MsrB domain in the interval 1-106 (MSFCSFFGGE…FSSSLKFIPK (106 aa)). 4 residues coordinate Zn(2+): Cys23, Cys26, Cys71, and Cys74. The active-site Nucleophile is the Sec95. Residue Sec95 is a non-standard amino acid, selenocysteine.

Belongs to the MsrB Met sulfoxide reductase family. It depends on Zn(2+) as a cofactor. Post-translationally, truncated MSRB1/SEPX1 proteins produced by failed UGA/Sec decoding are ubiquitinated by the CRL2(FEM1C) E3 ubiquitin-protein ligase complex.

The protein resides in the cytoplasm. It localises to the nucleus. It is found in the cytoskeleton. It catalyses the reaction L-methionyl-[protein] + [thioredoxin]-disulfide + H2O = L-methionyl-(R)-S-oxide-[protein] + [thioredoxin]-dithiol. The catalysed reaction is [thioredoxin]-disulfide + L-methionine + H2O = L-methionine (R)-S-oxide + [thioredoxin]-dithiol. Methionine-sulfoxide reductase that specifically reduces methionine (R)-sulfoxide back to methionine. While in many cases, methionine oxidation is the result of random oxidation following oxidative stress, methionine oxidation is also a post-translational modification that takes place on specific residue. Acts as a regulator of actin assembly by reducing methionine (R)-sulfoxide mediated by MICALs (MICAL1, MICAL2 or MICAL3) on actin, thereby promoting filament repolymerization. Plays a role in innate immunity by reducing oxidized actin, leading to actin repolymerization in macrophages. In Rattus norvegicus (Rat), this protein is Methionine-R-sulfoxide reductase B1 (Msrb1).